We begin with the raw amino-acid sequence, 509 residues long: Dol-P-Glc:Glc(2)Man(9)GlcNAc(2)-PP-Dol alpha-1,2-glucosyltransferase (509 aa).

The Cytoplasmic portion of the chain corresponds to 1-4 (MGKL). A helical transmembrane segment spans residues 5 to 25 (AVAAITSLWVIPMSIIVNHIV). Over 26 to 57 (PEPYMDEIFHVPQAQQYCNGNFRSWDPMITTP) the chain is Lumenal. The helical transmembrane segment at 58–78 (PGLYYLSLAHVASLFPGMLLM) threads the bilayer. The Cytoplasmic segment spans residues 79 to 99 (ENTSQSFSEACSTSVLRSTNA). Residues 100-120 (VSAVLCGVLVYEIIRFLGPNL) traverse the membrane as a helical segment. The Lumenal segment spans residues 121–124 (SDRK). Residues 125–145 (ATFMALVMSLYPLHWFFTFLY) form a helical membrane-spanning segment. The Cytoplasmic portion of the chain corresponds to 146–170 (YTDVASLTAVLAMYLTCLKRRYVLS). The helical transmembrane segment at 171–191 (ALFGTLAVFIRQTNVVWMLFV) threads the bilayer. Residues 192 to 285 (ACSGILDFTL…KWRILIKFSP (94 aa)) lie on the Lumenal side of the membrane. The tract at residues 210 to 254 (QEVNQELHQSSNKKGATLRSNLRKRKSDISSDTSDPFNHGQTVPS) is disordered. Polar residues-rich tracts occupy residues 215-229 (ELHQ…TLRS) and 239-254 (SSDT…TVPS). A helical transmembrane segment spans residues 286–306 (FIFVVVAFGIFILWNGGIVLG). The Cytoplasmic portion of the chain corresponds to 307 to 311 (AKEAH). Residues 312-332 (VVSLHFAQIMYFSLVSALFTA) traverse the membrane as a helical segment. The Lumenal portion of the chain corresponds to 333-355 (PLHFSVNQLRHQFHQLHRNWSLS). N351 carries an N-linked (GlcNAc...) asparagine glycan. A helical transmembrane segment spans residues 356–376 (LILTLVALVAGFVSVHFFSLA). The Cytoplasmic portion of the chain corresponds to 377–400 (HPYLLADNRHYPFYLWRKIINAHW). The chain crosses the membrane as a helical span at residues 401–421 (LMKYILVPVYVYSWFSILTLL). Topologically, residues 422–428 (AKTRRQT) are lumenal. A helical transmembrane segment spans residues 429–449 (WILVYFLATCGVLVPTPLIEF). The Cytoplasmic segment spans residues 450-472 (RYYTIPFYLFMLHSCVRSSSFAT). Residues 473 to 493 (WLLIGTIFVSINVFTMAMFLF) form a helical membrane-spanning segment. Residues 494–509 (RPFKWSHEDGVQRFIW) lie on the Lumenal side of the membrane.

Belongs to the ALG10 glucosyltransferase family.

The protein resides in the endoplasmic reticulum membrane. It carries out the reaction an alpha-D-Glc-(1-&gt;3)-alpha-D-Glc-(1-&gt;3)-alpha-D-Man-(1-&gt;2)-alpha-D-Man-(1-&gt;2)-alpha-D-Man-(1-&gt;3)-[alpha-D-Man-(1-&gt;2)-alpha-D-Man-(1-&gt;3)-[alpha-D-Man-(1-&gt;2)-alpha-D-Man-(1-&gt;6)]-alpha-D-Man-(1-&gt;6)]-beta-D-Man-(1-&gt;4)-beta-D-GlcNAc-(1-&gt;4)-alpha-D-GlcNAc-diphospho-di-trans,poly-cis-dolichol + a di-trans,poly-cis-dolichyl beta-D-glucosyl phosphate = a alpha-D-Glc-(1-&gt;2)-alpha-D-Glc-(1-&gt;3)-alpha-D-Glc-(1-&gt;3)-alpha-D-Man-(1-&gt;2)-alpha-D-Man-(1-&gt;2)-alpha-D-Man-(1-&gt;3)-[alpha-D-Man-(1-&gt;2)-alpha-D-Man-(1-&gt;3)-[alpha-D-Man-(1-&gt;2)-alpha-D-Man-(1-&gt;6)]-alpha-D-Man-(1-&gt;6)]-beta-D-Man-(1-&gt;4)-beta-D-GlcNAc-(1-&gt;4)-alpha-D-GlcNAc-diphospho-di-trans,poly-cis-dolichol + a di-trans,poly-cis-dolichyl phosphate + H(+). It participates in protein modification; protein glycosylation. Its function is as follows. Dol-P-Glc:Glc(2)Man(9)GlcNAc(2)-PP-Dol alpha-1,2-glucosyltransferase that operates in the biosynthetic pathway of dolichol-linked oligosaccharides, the glycan precursors employed in protein asparagine (N)-glycosylation. The assembly of dolichol-linked oligosaccharides begins on the cytosolic side of the endoplasmic reticulum membrane and finishes in its lumen. The sequential addition of sugars to dolichol pyrophosphate produces dolichol-linked oligosaccharides containing fourteen sugars, including two GlcNAcs, nine mannoses and three glucoses. Once assembled, the oligosaccharide is transferred from the lipid to nascent proteins by oligosaccharyltransferases. In the lumen of the endoplasmic reticulum, adds the third and last glucose residue from dolichyl phosphate glucose (Dol-P-Glc) onto the lipid-linked oligosaccharide intermediate Glc(2)Man(9)GlcNAc(2)-PP-Dol to produce Glc(3)Man(9)GlcNAc(2)-PP-Dol. This chain is Dol-P-Glc:Glc(2)Man(9)GlcNAc(2)-PP-Dol alpha-1,2-glucosyltransferase, found in Arabidopsis thaliana (Mouse-ear cress).